The primary structure comprises 454 residues: tRNA modification GTPase MnmE (454 aa).

(6S)-5-formyl-5,6,7,8-tetrahydrofolate contacts are provided by arginine 23, glutamate 80, and lysine 120. The TrmE-type G domain maps to 216–377 (GMKVVIAGRP…LRNHLKQSMG (162 aa)). Asparagine 226 is a K(+) binding site. Residues 226–231 (NAGKSS), 245–251 (TDIAGTT), 270–273 (DTAG), 335–338 (NKAD), and 358–360 (SAR) contribute to the GTP site. Serine 230 is a Mg(2+) binding site. Residues threonine 245, isoleucine 247, and threonine 250 each coordinate K(+). Residue threonine 251 coordinates Mg(2+). Residue lysine 454 participates in (6S)-5-formyl-5,6,7,8-tetrahydrofolate binding.

Belongs to the TRAFAC class TrmE-Era-EngA-EngB-Septin-like GTPase superfamily. TrmE GTPase family. As to quaternary structure, homodimer. Heterotetramer of two MnmE and two MnmG subunits. K(+) is required as a cofactor.

The protein resides in the cytoplasm. Functionally, exhibits a very high intrinsic GTPase hydrolysis rate. Involved in the addition of a carboxymethylaminomethyl (cmnm) group at the wobble position (U34) of certain tRNAs, forming tRNA-cmnm(5)s(2)U34. In Klebsiella pneumoniae subsp. pneumoniae (strain ATCC 700721 / MGH 78578), this protein is tRNA modification GTPase MnmE.